The primary structure comprises 214 residues: Histidine biosynthesis bifunctional protein HisIE (214 aa).

Residues 1–125 (MPATALSLPL…ESIEPPPADT (125 aa)) are phosphoribosyl-AMP cyclohydrolase. A phosphoribosyl-ATP pyrophosphohydrolase region spans residues 126–214 (LSQVYNIVCQ…VYEQLQLRRR (89 aa)).

It in the N-terminal section; belongs to the PRA-CH family. The protein in the C-terminal section; belongs to the PRA-PH family.

It is found in the cytoplasm. The enzyme catalyses 1-(5-phospho-beta-D-ribosyl)-ATP + H2O = 1-(5-phospho-beta-D-ribosyl)-5'-AMP + diphosphate + H(+). The catalysed reaction is 1-(5-phospho-beta-D-ribosyl)-5'-AMP + H2O = 1-(5-phospho-beta-D-ribosyl)-5-[(5-phospho-beta-D-ribosylamino)methylideneamino]imidazole-4-carboxamide. The protein operates within amino-acid biosynthesis; L-histidine biosynthesis; L-histidine from 5-phospho-alpha-D-ribose 1-diphosphate: step 2/9. Its pathway is amino-acid biosynthesis; L-histidine biosynthesis; L-histidine from 5-phospho-alpha-D-ribose 1-diphosphate: step 3/9. The protein is Histidine biosynthesis bifunctional protein HisIE of Thermosynechococcus vestitus (strain NIES-2133 / IAM M-273 / BP-1).